The primary structure comprises 776 residues: Protocadherin beta-16 (776 aa).

The first 28 residues, 1 to 28, serve as a signal peptide directing secretion; the sequence is MEIGWMHNRRQRQVLVFFVLLSLSGAGA. The Extracellular segment spans residues 29-690; it reads ELGSYSVVEE…TQANSLTVYL (662 aa). 5 Cadherin domains span residues 35–133, 138–242, 247–347, 352–451, and 456–561; these read VVEE…SPMF, MILK…APEF, YKVQ…PPQV, LTSP…APTF, and YTLF…SPFV. N-linked (GlcNAc...) asparagine glycosylation is found at N418 and N436. N567 carries an N-linked (GlcNAc...) asparagine glycan. One can recognise a Cadherin 6 domain in the interval 568-671; that stretch reads GSAPCTELVP…LVDGFSQPFL (104 aa). A helical membrane pass occupies residues 691–711; the sequence is VVALASVSSLFLFSVLLFVAV. Residues 712–776 lie on the Cytoplasmic side of the membrane; sequence RLCRRSRAAS…LKPIIPNFSP (65 aa).

Its subcellular location is the membrane. Its function is as follows. Potential calcium-dependent cell-adhesion protein. May be involved in the establishment and maintenance of specific neuronal connections in the brain. This Homo sapiens (Human) protein is Protocadherin beta-16.